Here is a 356-residue protein sequence, read N- to C-terminus: Dual-specificity RNA methyltransferase RlmN (356 aa).

Catalysis depends on glutamate 89, which acts as the Proton acceptor. Positions 108–341 constitute a Radical SAM core domain; that stretch reads KHARYTICVS…CTIRESKGLD (234 aa). An intrachain disulfide couples cysteine 115 to cysteine 346. Residues cysteine 122, cysteine 126, and cysteine 129 each coordinate [4Fe-4S] cluster. Residues 172-173, serine 204, 227-229, and asparagine 303 each bind S-adenosyl-L-methionine; these read GE and SLH. The S-methylcysteine intermediate role is filled by cysteine 346.

It belongs to the radical SAM superfamily. RlmN family. [4Fe-4S] cluster serves as cofactor.

The protein localises to the cytoplasm. It carries out the reaction adenosine(2503) in 23S rRNA + 2 reduced [2Fe-2S]-[ferredoxin] + 2 S-adenosyl-L-methionine = 2-methyladenosine(2503) in 23S rRNA + 5'-deoxyadenosine + L-methionine + 2 oxidized [2Fe-2S]-[ferredoxin] + S-adenosyl-L-homocysteine. The enzyme catalyses adenosine(37) in tRNA + 2 reduced [2Fe-2S]-[ferredoxin] + 2 S-adenosyl-L-methionine = 2-methyladenosine(37) in tRNA + 5'-deoxyadenosine + L-methionine + 2 oxidized [2Fe-2S]-[ferredoxin] + S-adenosyl-L-homocysteine. Specifically methylates position 2 of adenine 2503 in 23S rRNA and position 2 of adenine 37 in tRNAs. m2A2503 modification seems to play a crucial role in the proofreading step occurring at the peptidyl transferase center and thus would serve to optimize ribosomal fidelity. The sequence is that of Dual-specificity RNA methyltransferase RlmN from Campylobacter lari (strain RM2100 / D67 / ATCC BAA-1060).